Consider the following 121-residue polypeptide: Acidic phospholipase A2 SpII RP4 (121 aa).

Intrachain disulfides connect cysteine 25–cysteine 114, cysteine 27–cysteine 43, cysteine 42–cysteine 94, cysteine 48–cysteine 121, cysteine 49–cysteine 87, cysteine 56–cysteine 80, and cysteine 74–cysteine 85. Tyrosine 26, glycine 28, and glycine 30 together coordinate Ca(2+). Histidine 46 is an active-site residue. Aspartate 47 provides a ligand contact to Ca(2+). Aspartate 88 is a catalytic residue.

The cofactor is Ca(2+). Expressed by the venom gland.

It localises to the secreted. The catalysed reaction is a 1,2-diacyl-sn-glycero-3-phosphocholine + H2O = a 1-acyl-sn-glycero-3-phosphocholine + a fatty acid + H(+). Its function is as follows. Snake venom phospholipase A2 (PLA2) which exhibits indirect hemolysis, induces mild edema inflammation in the foot pads of mice and slightly delays anticoagulant activities. In mice, not lethal, even at the highest dose, and exhibits low to moderate myotoxicity on muscular fibers. PLA2 catalyzes the calcium-dependent hydrolysis of the 2-acyl groups in 3-sn-phosphoglycerides. This chain is Acidic phospholipase A2 SpII RP4, found in Bothrops alternatus (Urutu).